Here is a 129-residue protein sequence, read N- to C-terminus: Small ribosomal subunit protein uS11 (129 aa).

This sequence belongs to the universal ribosomal protein uS11 family. As to quaternary structure, part of the 30S ribosomal subunit. Interacts with proteins S7 and S18. Binds to IF-3.

Located on the platform of the 30S subunit, it bridges several disparate RNA helices of the 16S rRNA. Forms part of the Shine-Dalgarno cleft in the 70S ribosome. The protein is Small ribosomal subunit protein uS11 of Haemophilus influenzae (strain 86-028NP).